Consider the following 292-residue polypeptide: ATP synthase gamma chain (292 aa).

Belongs to the ATPase gamma chain family. As to quaternary structure, F-type ATPases have 2 components, CF(1) - the catalytic core - and CF(0) - the membrane proton channel. CF(1) has five subunits: alpha(3), beta(3), gamma(1), delta(1), epsilon(1). CF(0) has three main subunits: a, b and c.

It is found in the cell membrane. Produces ATP from ADP in the presence of a proton gradient across the membrane. The gamma chain is believed to be important in regulating ATPase activity and the flow of protons through the CF(0) complex. This is ATP synthase gamma chain from Caldicellulosiruptor saccharolyticus (strain ATCC 43494 / DSM 8903 / Tp8T 6331).